The primary structure comprises 119 residues: Beta-2-microglobulin (119 aa).

A signal peptide spans 1–20 (MACFVVVALLVLLSLSGLEA). Positions 25–114 (PKIQVYSRHP…VTFSTPKTVK (90 aa)) constitute an Ig-like C1-type domain. Cysteines 45 and 100 form a disulfide.

Belongs to the beta-2-microglobulin family. In terms of assembly, heterodimer of an alpha chain and a beta chain. Beta-2-microglobulin is the beta-chain of major histocompatibility complex class I molecules.

The protein resides in the secreted. Component of the class I major histocompatibility complex (MHC). Involved in the presentation of peptide antigens to the immune system. The chain is Beta-2-microglobulin (B2M) from Leontopithecus chrysopygus (Golden-rumped lion tamarin).